Here is a 345-residue protein sequence, read N- to C-terminus: L-threonine 3-dehydrogenase (345 aa).

Residue Cys39 participates in Zn(2+) binding. Active-site charge relay system residues include Thr41 and His44. Zn(2+)-binding residues include His64, Glu65, Cys94, Cys97, Cys100, and Cys108. NAD(+) is bound by residues Ile176, Asp196, Arg201, 263–265 (LGI), and 287–288 (VY).

The protein belongs to the zinc-containing alcohol dehydrogenase family. Homotetramer. Zn(2+) is required as a cofactor.

The protein localises to the cytoplasm. It carries out the reaction L-threonine + NAD(+) = (2S)-2-amino-3-oxobutanoate + NADH + H(+). It participates in amino-acid degradation; L-threonine degradation via oxydo-reductase pathway; glycine from L-threonine: step 1/2. Its function is as follows. Catalyzes the NAD(+)-dependent oxidation of L-threonine to 2-amino-3-ketobutyrate. In Anaeromyxobacter dehalogenans (strain 2CP-C), this protein is L-threonine 3-dehydrogenase.